Here is a 413-residue protein sequence, read N- to C-terminus: 1-deoxy-D-xylulose 5-phosphate reductoisomerase (413 aa).

NADPH contacts are provided by Thr-21, Gly-22, Ser-23, Ile-24, Gly-47, and Asn-127. Lys-128 provides a ligand contact to 1-deoxy-D-xylulose 5-phosphate. Glu-129 provides a ligand contact to NADPH. A Mn(2+)-binding site is contributed by Asp-151. 1-deoxy-D-xylulose 5-phosphate is bound by residues Ser-152, Glu-153, Ser-177, and His-200. Glu-153 contacts Mn(2+). NADPH is bound at residue Gly-206. Residues Ser-213, Asn-218, Lys-219, and Glu-222 each coordinate 1-deoxy-D-xylulose 5-phosphate. Position 222 (Glu-222) interacts with Mn(2+).

Belongs to the DXR family. Mg(2+) serves as cofactor. Mn(2+) is required as a cofactor.

It catalyses the reaction 2-C-methyl-D-erythritol 4-phosphate + NADP(+) = 1-deoxy-D-xylulose 5-phosphate + NADPH + H(+). It participates in isoprenoid biosynthesis; isopentenyl diphosphate biosynthesis via DXP pathway; isopentenyl diphosphate from 1-deoxy-D-xylulose 5-phosphate: step 1/6. Functionally, catalyzes the NADPH-dependent rearrangement and reduction of 1-deoxy-D-xylulose-5-phosphate (DXP) to 2-C-methyl-D-erythritol 4-phosphate (MEP). The protein is 1-deoxy-D-xylulose 5-phosphate reductoisomerase of Mycobacterium bovis (strain ATCC BAA-935 / AF2122/97).